The primary structure comprises 366 residues: Phenylalanine--tRNA ligase alpha subunit (366 aa).

Glu-259 serves as a coordination point for Mg(2+).

Belongs to the class-II aminoacyl-tRNA synthetase family. Phe-tRNA synthetase alpha subunit type 1 subfamily. As to quaternary structure, tetramer of two alpha and two beta subunits. Mg(2+) serves as cofactor.

The protein localises to the cytoplasm. The enzyme catalyses tRNA(Phe) + L-phenylalanine + ATP = L-phenylalanyl-tRNA(Phe) + AMP + diphosphate + H(+). This chain is Phenylalanine--tRNA ligase alpha subunit, found in Novosphingobium aromaticivorans (strain ATCC 700278 / DSM 12444 / CCUG 56034 / CIP 105152 / NBRC 16084 / F199).